The primary structure comprises 237 residues: Phosphoribosylaminoimidazole-succinocarboxamide synthase (237 aa).

It belongs to the SAICAR synthetase family.

The enzyme catalyses 5-amino-1-(5-phospho-D-ribosyl)imidazole-4-carboxylate + L-aspartate + ATP = (2S)-2-[5-amino-1-(5-phospho-beta-D-ribosyl)imidazole-4-carboxamido]succinate + ADP + phosphate + 2 H(+). It functions in the pathway purine metabolism; IMP biosynthesis via de novo pathway; 5-amino-1-(5-phospho-D-ribosyl)imidazole-4-carboxamide from 5-amino-1-(5-phospho-D-ribosyl)imidazole-4-carboxylate: step 1/2. This is Phosphoribosylaminoimidazole-succinocarboxamide synthase from Shigella boydii serotype 4 (strain Sb227).